We begin with the raw amino-acid sequence, 195 residues long: uncharacterized protein (195 aa).

The Nudix hydrolase domain occupies 34–165; that stretch reads SHHAAVLIPI…WLDIHRGGVN (132 aa). The Nudix box motif lies at 72-94; it reads GKADPQDSSLIETALREAEEEVA. The Mg(2+) site is built by E88 and E92.

The protein belongs to the Nudix hydrolase family. PCD1 subfamily. The cofactor is Mn(2+). Requires Mg(2+) as cofactor.

Functionally, probably mediates the hydrolysis of some nucleoside diphosphate derivatives. This is an uncharacterized protein from Yersinia enterocolitica serotype O:8 / biotype 1B (strain NCTC 13174 / 8081).